Consider the following 117-residue polypeptide: Ig heavy chain V region 102 (117 aa).

A signal peptide spans 1-19 (MGWSCIILFLVATATGVHS). Residues 20 to 49 (HVQLQQPGAELVKPGASVKVSCKASGYTFT) form a framework-1 region. Cys41 and Cys115 are disulfide-bonded. A complementarity-determining-1 region spans residues 50–54 (SYWMH). Residues 55–68 (WVKQRPGQGLEWIG) form a framework-2 region. The complementarity-determining-2 stretch occupies residues 69 to 85 (RIHPSDSDTNYNQKFKG). The framework-3 stretch occupies residues 86–117 (KATLTVDKSSSTAYMQLSSLTSEDSAVYYCAI).

In Mus musculus (Mouse), this protein is Ig heavy chain V region 102.